The following is a 111-amino-acid chain: Probable 4-amino-4-deoxy-L-arabinose-phosphoundecaprenol flippase subunit ArnE (111 aa).

The next 3 helical transmembrane spans lie at 38–58 (LWLG…LLVL), 61–81 (LPVG…TLAA), and 91–111 (PRHW…GSAA). In terms of domain architecture, EamA spans 40 to 109 (LGLALICMGA…IISGIIILGS (70 aa)).

Belongs to the ArnE family. In terms of assembly, heterodimer of ArnE and ArnF.

The protein localises to the cell inner membrane. The protein operates within bacterial outer membrane biogenesis; lipopolysaccharide biosynthesis. In terms of biological role, translocates 4-amino-4-deoxy-L-arabinose-phosphoundecaprenol (alpha-L-Ara4N-phosphoundecaprenol) from the cytoplasmic to the periplasmic side of the inner membrane. This is Probable 4-amino-4-deoxy-L-arabinose-phosphoundecaprenol flippase subunit ArnE from Salmonella agona (strain SL483).